We begin with the raw amino-acid sequence, 193 residues long: 21 kDa protein (193 aa).

A signal peptide spans 1–22; it reads MKLSKSTLVFSALLVILAAASA.

The sequence is that of 21 kDa protein from Daucus carota (Wild carrot).